The following is a 140-amino-acid chain: Translation initiation factor 2 subunit beta (140 aa).

This sequence belongs to the eIF-2-beta/eIF-5 family. Heterotrimer composed of an alpha, a beta and a gamma chain.

Its function is as follows. eIF-2 functions in the early steps of protein synthesis by forming a ternary complex with GTP and initiator tRNA. The polypeptide is Translation initiation factor 2 subunit beta (eif2b) (Pyrococcus abyssi (strain GE5 / Orsay)).